The following is a 211-amino-acid chain: LexA repressor (211 aa).

The segment at residues 27–47 (QTEIARAFGFKGVRAAQYHLE) is a DNA-binding region (H-T-H motif). Active-site for autocatalytic cleavage activity residues include Ser131 and Lys168.

The protein belongs to the peptidase S24 family. As to quaternary structure, homodimer.

It carries out the reaction Hydrolysis of Ala-|-Gly bond in repressor LexA.. Functionally, represses a number of genes involved in the response to DNA damage (SOS response), including recA and lexA. In the presence of single-stranded DNA, RecA interacts with LexA causing an autocatalytic cleavage which disrupts the DNA-binding part of LexA, leading to derepression of the SOS regulon and eventually DNA repair. This chain is LexA repressor, found in Stenotrophomonas maltophilia (strain R551-3).